A 401-amino-acid chain; its full sequence is 1-deoxy-D-xylulose 5-phosphate reductoisomerase (401 aa).

NADPH is bound by residues T11, G12, S13, I14, R38, N39, and N125. K126 contacts 1-deoxy-D-xylulose 5-phosphate. An NADPH-binding site is contributed by E127. D151 serves as a coordination point for Mn(2+). 1-deoxy-D-xylulose 5-phosphate-binding residues include S152, E153, S179, and H202. E153 contributes to the Mn(2+) binding site. Position 208 (G208) interacts with NADPH. S215, N220, K221, and E224 together coordinate 1-deoxy-D-xylulose 5-phosphate. E224 is a Mn(2+) binding site.

The protein belongs to the DXR family. It depends on Mg(2+) as a cofactor. Requires Mn(2+) as cofactor.

The catalysed reaction is 2-C-methyl-D-erythritol 4-phosphate + NADP(+) = 1-deoxy-D-xylulose 5-phosphate + NADPH + H(+). It functions in the pathway isoprenoid biosynthesis; isopentenyl diphosphate biosynthesis via DXP pathway; isopentenyl diphosphate from 1-deoxy-D-xylulose 5-phosphate: step 1/6. In terms of biological role, catalyzes the NADPH-dependent rearrangement and reduction of 1-deoxy-D-xylulose-5-phosphate (DXP) to 2-C-methyl-D-erythritol 4-phosphate (MEP). In Paraburkholderia xenovorans (strain LB400), this protein is 1-deoxy-D-xylulose 5-phosphate reductoisomerase.